The chain runs to 306 residues: Diterpene cyclase eriG (306 aa).

A run of 2 helical transmembrane segments spans residues 13–33 (IFFGFSWRDWSTTIIPGSIFA) and 43–63 (ATLVKNYLFLVTWLTPYIYFF). N64 carries an N-linked (GlcNAc...) asparagine glycan. 4 helical membrane-spanning segments follow: residues 115-135 (FLPETLCWIATVAFLCLTSYG), 161-181 (IAPATPTSDAWVYAVSVWAGL), 213-233 (LIITFFALPAACWVLSLAGIF), and 265-285 (MFYTYIFCLILAFCALDGLGL).

Belongs to the UbiA prenyltransferase family. The cofactor is Mg(2+).

The protein resides in the membrane. The enzyme catalyses (2E,6E,10E)-geranylgeranyl diphosphate = (-)-cyatha-3,12-diene + diphosphate. It participates in secondary metabolite biosynthesis. Its activity is regulated as follows. EDTA completely blocks the reaction. Its function is as follows. Diterpene cyclase; part of the gene cluster that mediates the biosynthesis of erinacines, cyathane-xylosides that show unique biological activities, including leishmanicidal activity, stimulating activity for nerve growth-factor synthesis, and agonistic activity toward the kappa opioid receptor. Within the pathway, eriG acts as a diterpene cyclase that converts geranylgeranyl diphosphate (GGPP) into cyatha-3,12-diene. EriG is unable to use geranyl diphosphate (GPP) or farnesyl diphosphate (FPP) as substrates. The first step of the erinacines biosynthesis pathway is catalyzed by the geranylgeranyl diphosphate (GGPP) synthase eriE via conversion of farnesyl pyrophosphate and isopentyl pyrophosphate into geranylgeranyl pyrophosphate (GGPP). GGPP is then substrate of the diterpene cyclase eriG for the production of cyatha-3,12-diene. The cytochrome P450 monooxygenase eriI then hydroxylates cyatha-3,12-diene at C-14 of the seven-membered ring to produce erinacol, which is further hydroxylated at C-15 by the cytochrome P450 monooxygenase eriC to yield cyathadiol. The cytochrome P450 monooxygenase eriA then catalyzes C-11 hydroxylation in the presence of the short chain dehydrogenase/reductase (SDR) eriH, which leads to the production of cyathatriol. The acetyltransferase eriL converts cyathatriol into 11-O-acetyl-cyathatriol. The SDR eriH catalyzes further oxidation of 11-O-acetyl-cyathatriol into 1-O-acetylcyathin A3. Finally, the glycosyl transferase eriJ tranfers xylose from UDP-xylose onto C-14 of 11-O-acetyl-cyathatriol to form eracine Q. EriJ is also able to convert 11-O-acetyl-cyathatriol to eracine Q2 by using UDP-D-glucose as cosubstrate, but at a lower rate. This is Diterpene cyclase eriG from Hericium erinaceus (Lion's mane mushroom).